The following is a 567-amino-acid chain: Interferon lambda receptor 1 (567 aa).

The signal sequence occupies residues 1–22; that stretch reads MSAWRIRVLATLCFLWQPRVHG. At 23–229 the chain is on the extracellular side; it reads QLPPPQNVTL…YEGEWKFPFS (207 aa). Positions 26–121 constitute a Fibronectin type-III domain; the sequence is PPQNVTLLSK…KSQFKEYHLD (96 aa). An N-linked (GlcNAc...) asparagine glycan is attached at Asn29. Cystine bridges form between Cys74-Cys82, Cys86-Cys149, and Cys193-Cys215. An N-linked (GlcNAc...) asparagine glycan is attached at Asn141. The helical transmembrane segment at 230-250 threads the bilayer; sequence ATIPVFVLLILLTSASIIWLL. At 251-567 the chain is on the cytoplasmic side; the sequence is KQDAKHKKMP…YQHSHYMRRS (317 aa).

This sequence belongs to the type II cytokine receptor family. Heterodimer with IL10RB.

Its subcellular location is the membrane. Its function is as follows. The IFNLR1/IL10RB dimer is a receptor for the cytokine ligands IFNL2 and IFNL3 and mediates their antiviral activity. The ligand/receptor complex stimulate the activation of the JAK/STAT signaling pathway leading to the expression of IFN-stimulated genes (ISG), which contribute to the antiviral state. Determines the cell type specificity of the lambda interferon action. Shows a more restricted pattern of expression in the epithelial tissues thereby limiting responses to lambda interferons primarily to epithelial cells of the respiratory, gastrointestinal, and reproductive tracts. This is Interferon lambda receptor 1 (IFNLR1) from Gallus gallus (Chicken).